Here is a 329-residue protein sequence, read N- to C-terminus: Serpentine receptor class alpha-4 (329 aa).

A run of 6 helical transmembrane segments spans residues 25–45, 103–123, 144–164, 188–208, 238–258, and 273–293; these read IIVL…IKVV, LYLE…TGLL, GLAI…LIIW, YFQS…ILIW, ICFL…GFFI, and LVAV…ILIF.

Belongs to the nematode receptor-like protein sra family.

Its subcellular location is the membrane. This chain is Serpentine receptor class alpha-4 (sra-4), found in Caenorhabditis elegans.